We begin with the raw amino-acid sequence, 484 residues long: Probable sphingolipid transporter spinster homolog 2 (484 aa).

The tract at residues Met1–Ile23 is disordered. Residues Leu38 to Ser58 traverse the membrane as a helical segment. Asn62 and Asn85 each carry an N-linked (GlcNAc...) asparagine glycan. The next 11 helical transmembrane spans lie at Val93–Ala113, Ile122–Phe142, Ile147–Ile167, Ala181–Val201, Ala209–Lys229, Val273–Tyr293, Ile311–Leu331, Leu345–Phe362, Leu377–Ser397, Met405–Leu425, and Ser436–Leu456. A Phosphoserine modification is found at Ser466.

This sequence belongs to the major facilitator superfamily. Spinster (TC 2.A.1.49) family.

Its subcellular location is the late endosome membrane. The protein resides in the lysosome membrane. Its function is as follows. Probable sphingolipid transporter that plays a central role in endosomes and/or lysosomes storage. This Arabidopsis thaliana (Mouse-ear cress) protein is Probable sphingolipid transporter spinster homolog 2.